We begin with the raw amino-acid sequence, 412 residues long: CinA-like protein (412 aa).

This sequence belongs to the CinA family.

This Kosmotoga olearia (strain ATCC BAA-1733 / DSM 21960 / TBF 19.5.1) protein is CinA-like protein.